The primary structure comprises 159 residues: 2-C-methyl-D-erythritol 2,4-cyclodiphosphate synthase (159 aa).

2 residues coordinate a divalent metal cation: Asp10 and His12. Residues 10–12 (DVH) and 36–37 (HS) each bind 4-CDP-2-C-methyl-D-erythritol 2-phosphate. His44 contributes to the a divalent metal cation binding site. 4-CDP-2-C-methyl-D-erythritol 2-phosphate-binding positions include 58 to 60 (DIG), 63 to 67 (FPDTD), 102 to 108 (AQAPKMA), 134 to 137 (TTTE), Phe141, and Arg144.

This sequence belongs to the IspF family. In terms of assembly, homotrimer. Requires a divalent metal cation as cofactor.

The catalysed reaction is 4-CDP-2-C-methyl-D-erythritol 2-phosphate = 2-C-methyl-D-erythritol 2,4-cyclic diphosphate + CMP. The protein operates within isoprenoid biosynthesis; isopentenyl diphosphate biosynthesis via DXP pathway; isopentenyl diphosphate from 1-deoxy-D-xylulose 5-phosphate: step 4/6. Its function is as follows. Involved in the biosynthesis of isopentenyl diphosphate (IPP) and dimethylallyl diphosphate (DMAPP), two major building blocks of isoprenoid compounds. Catalyzes the conversion of 4-diphosphocytidyl-2-C-methyl-D-erythritol 2-phosphate (CDP-ME2P) to 2-C-methyl-D-erythritol 2,4-cyclodiphosphate (ME-CPP) with a corresponding release of cytidine 5-monophosphate (CMP). The chain is 2-C-methyl-D-erythritol 2,4-cyclodiphosphate synthase from Shewanella piezotolerans (strain WP3 / JCM 13877).